A 318-amino-acid polypeptide reads, in one-letter code: MGNGVQEGSVRLREDAEAVLAGAVSSKRDHRQVLSSLLSGALAGALAKTAVAPLDRTKIIFQVSSKRFSAKEAFRLLYFTYLNEGFLSLWRGNSATMVRVIPYAAIQFSAHEEYKRILGHYYGFRGEALPPWPRLLAGALAGTTAASLTYPLDLVRARMAVTPKEMYSNIFHVFIRISREEGLKTLYFGFTPTVLGVIPYAGLSFFTYESLKSLHREYSGRPQPYPFERMVFGACAGLIGQSASYPLDVVRRRMQTAGVTGHQHGSILSTLRSIVREEGAVRGLYKGLSMNWLKGPIAVGISFTTFDLMQILLRRLQS.

3 Solcar repeats span residues 31–117, 129–214, and 224–312; these read RQVL…YKRI, LPPW…LKSL, and PYPF…MQIL. Helical transmembrane passes span 33 to 53, 89 to 109, 135 to 155, 186 to 206, 230 to 250, and 293 to 313; these read VLSSLLSGALAGALAKTAVAP, LWRGNSATMVRVIPYAAIQFS, LLAGALAGTTAASLTYPLDLV, LYFGFTPTVLGVIPYAGLSFF, MVFGACAGLIGQSASYPLDVV, and LKGPIAVGISFTTFDLMQILL.

This sequence belongs to the mitochondrial carrier (TC 2.A.29) family.

The protein resides in the mitochondrion inner membrane. The enzyme catalyses ADP(out) + CoA(in) = ADP(in) + CoA(out). The catalysed reaction is 3'-dephospho-CoA(in) + ADP(out) = 3'-dephospho-CoA(out) + ADP(in). It catalyses the reaction adenosine 3',5'-bisphosphate(in) + ADP(out) = adenosine 3',5'-bisphosphate(out) + ADP(in). It carries out the reaction AMP(in) + ADP(out) = AMP(out) + ADP(in). The enzyme catalyses dADP(in) + ADP(out) = dADP(out) + ADP(in). The catalysed reaction is ADP(in) + ATP(out) = ADP(out) + ATP(in). Functionally, mitochondrial carrier mediating the transport of coenzyme A (CoA) in mitochondria in exchange for intramitochondrial (deoxy)adenine nucleotides and adenosine 3',5'-diphosphate. This Mus musculus (Mouse) protein is Mitochondrial coenzyme A transporter SLC25A42 (Slc25a42).